The following is a 212-amino-acid chain: Glycerol-3-phosphate acyltransferase (212 aa).

A run of 5 helical transmembrane segments spans residues 5–25 (ALGMIIFAYLCGSISSAILVC), 53–73 (VAAAAVLVFDILKGMLPVWLA), 80–100 (PLYLGLTAIAACLGHIYPVFF), 112–132 (FGAIAPIGWDLTGLMTGTWLL), and 138–158 (GYSSLGAIISALIAPFYVWWF).

This sequence belongs to the PlsY family. As to quaternary structure, probably interacts with PlsX.

It is found in the cell inner membrane. The catalysed reaction is an acyl phosphate + sn-glycerol 3-phosphate = a 1-acyl-sn-glycero-3-phosphate + phosphate. It participates in lipid metabolism; phospholipid metabolism. Catalyzes the transfer of an acyl group from acyl-phosphate (acyl-PO(4)) to glycerol-3-phosphate (G3P) to form lysophosphatidic acid (LPA). This enzyme utilizes acyl-phosphate as fatty acyl donor, but not acyl-CoA or acyl-ACP. This Serratia proteamaculans (strain 568) protein is Glycerol-3-phosphate acyltransferase.